Reading from the N-terminus, the 382-residue chain is Galactokinase (382 aa).

34–37 (EHTD) serves as a coordination point for substrate. Residue 124–130 (GAGLSSS) participates in ATP binding. Serine 130 and glutamate 162 together coordinate Mg(2+). Catalysis depends on aspartate 174, which acts as the Proton acceptor. Tyrosine 223 lines the substrate pocket.

This sequence belongs to the GHMP kinase family. GalK subfamily.

Its subcellular location is the cytoplasm. It carries out the reaction alpha-D-galactose + ATP = alpha-D-galactose 1-phosphate + ADP + H(+). It functions in the pathway carbohydrate metabolism; galactose metabolism. In terms of biological role, catalyzes the transfer of the gamma-phosphate of ATP to D-galactose to form alpha-D-galactose-1-phosphate (Gal-1-P). This Escherichia fergusonii (strain ATCC 35469 / DSM 13698 / CCUG 18766 / IAM 14443 / JCM 21226 / LMG 7866 / NBRC 102419 / NCTC 12128 / CDC 0568-73) protein is Galactokinase.